A 202-amino-acid chain; its full sequence is MSTPSFSPRTATVERTTAETDVSVALTLDGDGSYDVDTGVGFFDHMLSLFAKHGALDLEVRCDGDLEVDDHHTVEDVAIGLGRALDDALGDKAHIARYGHAYVPMDDALARAVVDLSGRSYCHLEASFERNQVGGLSTELVEHVWRSVADHARCNLHLTVLRGHNAHHKIEALFKAAARALRTAVRRRADHAEVASTKGTLA.

Belongs to the imidazoleglycerol-phosphate dehydratase family.

It localises to the cytoplasm. It carries out the reaction D-erythro-1-(imidazol-4-yl)glycerol 3-phosphate = 3-(imidazol-4-yl)-2-oxopropyl phosphate + H2O. It functions in the pathway amino-acid biosynthesis; L-histidine biosynthesis; L-histidine from 5-phospho-alpha-D-ribose 1-diphosphate: step 6/9. This chain is Imidazoleglycerol-phosphate dehydratase, found in Salinibacter ruber (strain DSM 13855 / M31).